The primary structure comprises 78 residues: UPF0270 protein YPTB3725 (78 aa).

Belongs to the UPF0270 family.

The protein is UPF0270 protein YPTB3725 of Yersinia pseudotuberculosis serotype I (strain IP32953).